Reading from the N-terminus, the 580-residue chain is MTDDSKDTDLSEDNGFPTDYEIAQNADMTPIWDLLEPWDLGNDDLSYYGEYTAKLSHDAVDHLREEAKTRENNLILVTGMTPTPMGEGKTVTTVGLGQTLNHLDEEAMIAIREPSLGPVFGVKGGAAGGGYSQVLPMEEINLHFTGDLHALTSAHNLIAAMLDAKLSQSDEFDVDVNDISWPRALDMNDRALRETVIGLGGESGGVPREDGFLLTAASELMAVLCLSSDLEDLKMRVSRIIVGYENDGEPITVDDIDATGPVTMLLRDAIEPNVVQTIEGTPAFVHGGPFANIAHGTNSLIADKAAFGMGDYLVTEAGFGSDLGAEKFMNIVCRLGDMTPDAITLVASVRALKYHGLDMWPADIDEINGAGVDALEAGFVNLDKHVTNLQKFGIPVVVAVNRFPNDTDVEVNAVLNHCRNDLNVKAASSTVFAEGSEGGVELAERVIGAVESSDPEDFEYLYPADATIKEKIETVATEIYGAGSVNYSTDAEDDIERMRELGFDTVPVCLSKTFHSLTDDARQKGAPTGWTLNVRKLYPSAGAGFIVALTGDVLTMPGLPADPAAADMDIDADGDITGLF.

83–90 is an ATP binding site; sequence TPMGEGKT.

It belongs to the formate--tetrahydrofolate ligase family.

It carries out the reaction (6S)-5,6,7,8-tetrahydrofolate + formate + ATP = (6R)-10-formyltetrahydrofolate + ADP + phosphate. It functions in the pathway one-carbon metabolism; tetrahydrofolate interconversion. This is Formate--tetrahydrofolate ligase from Haloquadratum walsbyi (strain DSM 16790 / HBSQ001).